The chain runs to 129 residues: Natriuretic peptides B (129 aa).

An N-terminal signal peptide occupies residues 1-26; sequence MDPQKALSRTLLLLLFLHLSLLGCRS. A disulfide bridge connects residues Cys107 and Cys123.

It belongs to the natriuretic peptide family. In terms of processing, the precursor molecule is proteolytically cleaved, possibly by FURIN or CORIN, to produce the active peptide. May undergo further proteolytic cleavage by various proteases such as DPP4, MME and possibly FAP, to give rise to a variety of shorter peptides. May be cleaved at Pro-99 by the prolyl endopeptidase FAP (seprase) activity (in vitro). May be degraded by IDE. During IDE degradation, the resulting products initially increase the activation of NPR1 and can also stimulate NPR2 to produce cGMP before the fragments are completely degraded and inactivated by IDE (in vitro).

It localises to the secreted. Cardiac hormone that plays a key role in mediating cardio-renal homeostasis. May also function as a paracrine antifibrotic factor in the heart. Acts by specifically binding and stimulating NPR1 to produce cGMP, which in turn activates effector proteins that drive various biological responses. Involved in regulating the extracellular fluid volume and maintaining the fluid-electrolyte balance through natriuresis, diuresis, vasorelaxation, and inhibition of renin and aldosterone secretion. Binds the clearance receptor NPR3. The polypeptide is Natriuretic peptides B (NPPB) (Ovis aries (Sheep)).